Reading from the N-terminus, the 369-residue chain is Protein-glutamate methylesterase/protein-glutamine glutaminase 1 (369 aa).

Residues 11-128 (RVLIVDDSAA…DLERQEASIR (118 aa)) enclose the Response regulatory domain. Aspartate 62 is subject to 4-aspartylphosphate. Positions 136-168 (ATETTRRRSQPEPRPLAPGPKLTADEILPARPP) are disordered. The 189-residue stretch at 170-358 (PVPETMPVVC…LDRLAARIME (189 aa)) folds into the CheB-type methylesterase domain. Active-site residues include serine 183, histidine 209, and aspartate 305.

Belongs to the CheB family. Phosphorylated by CheA. Phosphorylation of the N-terminal regulatory domain activates the methylesterase activity.

The protein resides in the cytoplasm. It catalyses the reaction [protein]-L-glutamate 5-O-methyl ester + H2O = L-glutamyl-[protein] + methanol + H(+). The catalysed reaction is L-glutaminyl-[protein] + H2O = L-glutamyl-[protein] + NH4(+). Involved in chemotaxis. Part of a chemotaxis signal transduction system that modulates chemotaxis in response to various stimuli. Catalyzes the demethylation of specific methylglutamate residues introduced into the chemoreceptors (methyl-accepting chemotaxis proteins or MCP) by CheR. Also mediates the irreversible deamidation of specific glutamine residues to glutamic acid. The sequence is that of Protein-glutamate methylesterase/protein-glutamine glutaminase 1 from Cereibacter sphaeroides (strain ATCC 17023 / DSM 158 / JCM 6121 / CCUG 31486 / LMG 2827 / NBRC 12203 / NCIMB 8253 / ATH 2.4.1.) (Rhodobacter sphaeroides).